The primary structure comprises 242 residues: Small ribosomal subunit protein uS2 (242 aa).

This sequence belongs to the universal ribosomal protein uS2 family.

This chain is Small ribosomal subunit protein uS2, found in Shewanella putrefaciens (strain CN-32 / ATCC BAA-453).